Reading from the N-terminus, the 177-residue chain is Probable inosine/xanthosine triphosphatase (177 aa).

Belongs to the YjjX NTPase family. In terms of assembly, homodimer. The cofactor is Mg(2+). Requires Mn(2+) as cofactor.

The enzyme catalyses XTP + H2O = XDP + phosphate + H(+). The catalysed reaction is ITP + H2O = IDP + phosphate + H(+). In terms of biological role, phosphatase that hydrolyzes non-canonical purine nucleotides such as XTP and ITP to their respective diphosphate derivatives. Probably excludes non-canonical purines from DNA/RNA precursor pool, thus preventing their incorporation into DNA/RNA and avoiding chromosomal lesions. The protein is Probable inosine/xanthosine triphosphatase of Pyrobaculum islandicum (strain DSM 4184 / JCM 9189 / GEO3).